Reading from the N-terminus, the 694-residue chain is Beta-mannosyltransferase 8 (694 aa).

Residues 1–11 (MKFPKLRKRTV) are Cytoplasmic-facing. A helical membrane pass occupies residues 12-29 (YWAVLTVFALFTIHFVFQ). The Extracellular segment spans residues 30-694 (YKEHNSHRVQ…YLYDHASVNS (665 aa)). N-linked (GlcNAc...) asparagine glycans are attached at residues Asn101 and Asn542.

This sequence belongs to the BMT family.

It is found in the membrane. Functionally, beta-mannosyltransferase involved in cell wall biosynthesis through beta-1,2-mannosylation of cell wall phosphopeptidomannan. Plays a role in the ability to produce hyphae in the presence of three bacterial species. This chain is Beta-mannosyltransferase 8 (BMT8), found in Candida albicans (strain SC5314 / ATCC MYA-2876) (Yeast).